Reading from the N-terminus, the 726-residue chain is Phenylalanine--tRNA ligase beta subunit (726 aa).

The tRNA-binding domain maps to 38 to 150; sequence FSSSKGLLFA…NFASLNDDAS (113 aa). The region spanning 394 to 467 is the B5 domain; it reads DKKVEINFDE…RFYNYDNFKE (74 aa). Positions 445, 451, 454, and 455 each coordinate Mg(2+).

This sequence belongs to the phenylalanyl-tRNA synthetase beta subunit family. Type 1 subfamily. As to quaternary structure, tetramer of two alpha and two beta subunits. Mg(2+) is required as a cofactor.

The protein localises to the cytoplasm. It carries out the reaction tRNA(Phe) + L-phenylalanine + ATP = L-phenylalanyl-tRNA(Phe) + AMP + diphosphate + H(+). This chain is Phenylalanine--tRNA ligase beta subunit, found in Mycoplasmopsis synoviae (strain 53) (Mycoplasma synoviae).